Consider the following 205-residue polypeptide: uncharacterized protein (205 aa).

An HTH tetR-type domain is found at 11–71 (KTRRALVDAA…EMVDEAGLML (61 aa)).

This is an uncharacterized protein from Haemophilus influenzae (strain ATCC 51907 / DSM 11121 / KW20 / Rd).